The chain runs to 471 residues: Putative multidrug resistance protein MdtD (471 aa).

The Periplasmic segment spans residues 1–11; the sequence is MTDLPDSTRWQ. A helical transmembrane segment spans residues 12-32; that stretch reads LWIVAFGFFMQSLDTTIVNTA. Residues 33–48 are Cytoplasmic-facing; the sequence is LPSMAQSLGESPLHMH. A helical membrane pass occupies residues 49-69; sequence MVIVSYVLTVAVMLPASGWLA. The Periplasmic segment spans residues 70 to 76; sequence DKVGVRN. A helical transmembrane segment spans residues 77–97; it reads IFFTAIVLFTLGSLFCALSGT. Over 98–101 the chain is Cytoplasmic; the sequence is LNEL. The helical transmembrane segment at 102-124 threads the bilayer; that stretch reads LLARALQGVGGAMMVPVGRLTVM. Residues 125 to 137 lie on the Periplasmic side of the membrane; it reads KIVPREQYMAAMT. The chain crosses the membrane as a helical span at residues 138–158; the sequence is FVTLPGQIGPLLGPALGGLLV. Topologically, residues 159 to 164 are cytoplasmic; that stretch reads EYASWH. The chain crosses the membrane as a helical span at residues 165 to 185; that stretch reads WIFLINIPVGIIGAIATLMLM. Residues 186 to 196 lie on the Periplasmic side of the membrane; sequence PNYTMQTRRFD. A helical transmembrane segment spans residues 197–217; that stretch reads LSGFLLLAVGMAVLTLALDGS. The Cytoplasmic segment spans residues 218–224; it reads KGTGFSP. The helical transmembrane segment at 225–245 threads the bilayer; that stretch reads LAIAGLVAVGVVALVLYLLHA. The Periplasmic segment spans residues 246–262; sequence QNNNRALFSLKLFRTRT. The chain crosses the membrane as a helical span at residues 263 to 283; the sequence is FSLGLAGSFAGRIGSGMLPFM. The Cytoplasmic segment spans residues 284–285; that stretch reads TP. The helical transmembrane segment at 286–306 threads the bilayer; that stretch reads VFLQIGLGFSPFHAGLMMIPM. Over 307–341 the chain is Periplasmic; the sequence is VLGSMGMKRIVVQVVNRFGYRWVLVATTLGLSLVT. The helical transmembrane segment at 342–362 threads the bilayer; the sequence is LLFMTTALLGWYYVLPFVLFL. Over 363–395 the chain is Cytoplasmic; sequence QGMVNSTRFSSMNTLTLKDLPDNLASSGNSLLS. The helical transmembrane segment at 396–416 threads the bilayer; that stretch reads MIMQLSMSIGVTIAGLLLGLF. The Periplasmic segment spans residues 417–430; that stretch reads GSQHVSVDSGTTQT. The chain crosses the membrane as a helical span at residues 431 to 451; it reads VFMYTWLSMAFIIALPAFVFA. Residues 452-471 are Cytoplasmic-facing; sequence RVPSDTHQNVAISRRKRSAQ.

The protein belongs to the major facilitator superfamily. TCR/Tet family.

It localises to the cell inner membrane. The protein is Putative multidrug resistance protein MdtD of Escherichia coli O81 (strain ED1a).